A 546-amino-acid polypeptide reads, in one-letter code: Chaperonin GroEL 1 (546 aa).

Residues 30 to 33, Lys-51, 87 to 91, Gly-415, 479 to 481, and Asp-495 contribute to the ATP site; these read TLGP, DGTTT, and NAA.

This sequence belongs to the chaperonin (HSP60) family. In terms of assembly, forms a cylinder of 14 subunits composed of two heptameric rings stacked back-to-back. Interacts with the co-chaperonin GroES.

The protein localises to the cytoplasm. The catalysed reaction is ATP + H2O + a folded polypeptide = ADP + phosphate + an unfolded polypeptide.. Together with its co-chaperonin GroES, plays an essential role in assisting protein folding. The GroEL-GroES system forms a nano-cage that allows encapsulation of the non-native substrate proteins and provides a physical environment optimized to promote and accelerate protein folding. The chain is Chaperonin GroEL 1 from Paraburkholderia xenovorans (strain LB400).